We begin with the raw amino-acid sequence, 204 residues long: Protein GrpE (204 aa).

Positions 1–52 (MSSKNNPESETKAKNKWEKVMEAEEEQEEGGGDGSQEMEPHREGLEFPSREK) are disordered. 2 stretches are compositionally biased toward basic and acidic residues: residues 7–22 (PESETKAKNKWEKVME) and 38–52 (MEPHREGLEFPSREK).

Belongs to the GrpE family. Homodimer.

It is found in the cytoplasm. Its function is as follows. Participates actively in the response to hyperosmotic and heat shock by preventing the aggregation of stress-denatured proteins, in association with DnaK and GrpE. It is the nucleotide exchange factor for DnaK and may function as a thermosensor. Unfolded proteins bind initially to DnaJ; upon interaction with the DnaJ-bound protein, DnaK hydrolyzes its bound ATP, resulting in the formation of a stable complex. GrpE releases ADP from DnaK; ATP binding to DnaK triggers the release of the substrate protein, thus completing the reaction cycle. Several rounds of ATP-dependent interactions between DnaJ, DnaK and GrpE are required for fully efficient folding. This is Protein GrpE from Coxiella burnetii (strain Dugway 5J108-111).